The sequence spans 456 residues: Putative sodium-coupled neutral amino acid transporter 11 (456 aa).

Residues 1–25 (MRAGPRRQHLLPPQDNRAAVGYQRQ) form a disordered region. Residues 58 to 78 (FNVVNSIIGSGIIDFSLILLI) form a helical membrane-spanning segment. Asn94 carries N-linked (GlcNAc...) asparagine glycosylation. The next 6 membrane-spanning stretches (helical) occupy residues 98–118 (GFPGYILLSVLQFLYPFIAMI), 143–163 (VFIGRHFIIGLSTVTFTLPLS), 171–191 (LGKVSLISTGLTTLILGIVMA), 206–226 (AWVFAKPNAIQAVGVMSFAFI), 252–272 (MSIVISVFICIFFATCGYLTF), and 291–313 (VTFGRFCYGVTVILTYPMECFVT). Residue Asn325 is glycosylated (N-linked (GlcNAc...) asparagine). 3 consecutive transmembrane segments (helical) span residues 329-349 (VFHIVVTVMVITVATLVSLLI), 351-371 (CLGIVLELNGVLCATPLIFII), and 390-410 (IMSYVMLPIGAAVMVFGFVMA).

It belongs to the amino acid/polyamine transporter 2 family.

It localises to the membrane. Its function is as follows. Putative sodium-dependent amino acid/proton antiporter. In Macaca fascicularis (Crab-eating macaque), this protein is Putative sodium-coupled neutral amino acid transporter 11 (SLC38A11).